We begin with the raw amino-acid sequence, 51 residues long: UPF0391 membrane protein Psyc_0130 (51 aa).

The next 2 helical transmembrane spans lie at 6–26 (IIFAVIALLASFLGFGGVAGL) and 28–47 (ANFAYILLALAVILFIVAFV).

Belongs to the UPF0391 family.

The protein localises to the cell membrane. The polypeptide is UPF0391 membrane protein Psyc_0130 (Psychrobacter arcticus (strain DSM 17307 / VKM B-2377 / 273-4)).